The sequence spans 301 residues: Bifunctional protein FolD (301 aa).

Residues Gly-166–Ser-168, Ser-191, and Ile-232 each bind NADP(+).

The protein belongs to the tetrahydrofolate dehydrogenase/cyclohydrolase family. In terms of assembly, homodimer.

The enzyme catalyses (6R)-5,10-methylene-5,6,7,8-tetrahydrofolate + NADP(+) = (6R)-5,10-methenyltetrahydrofolate + NADPH. The catalysed reaction is (6R)-5,10-methenyltetrahydrofolate + H2O = (6R)-10-formyltetrahydrofolate + H(+). It participates in one-carbon metabolism; tetrahydrofolate interconversion. Functionally, catalyzes the oxidation of 5,10-methylenetetrahydrofolate to 5,10-methenyltetrahydrofolate and then the hydrolysis of 5,10-methenyltetrahydrofolate to 10-formyltetrahydrofolate. The chain is Bifunctional protein FolD from Orientia tsutsugamushi (strain Boryong) (Rickettsia tsutsugamushi).